The chain runs to 82 residues: Protein CYSTEINE-RICH TRANSMEMBRANE MODULE 13 (82 aa).

The disordered stretch occupies residues 1 to 58; that stretch reads MYHQEQHPVGAPPPQGYPPKDGYPPAGYPPAGYPPPGYAQGYPAQGYPPPQYSQAPQQ. A compositionally biased stretch (pro residues) spans 26–37; sequence AGYPPAGYPPPG. The chain crosses the membrane as a helical span at residues 59-76; that stretch reads KQNAGMLEGCLAALCCCC.

It belongs to the CYSTM1 family. In terms of assembly, homodimer and heterodimers. Interacts with CYSTM7, CYTSM3, CYTSM4, CYTSM5, CYTSM6, CYTSM9, CYTSM10 and CYTSM11. Binds weakly to CYSTM1 and CYSTM2. In terms of tissue distribution, expressed in root meristem, root vasculature, leaf vasculature and floral organ primordia. Mostly expressed in roots and flowers and, to a lower extent, in stems, siliques and leaves.

Its subcellular location is the cell membrane. Required for the promotion of megasporogenesis, or promotion of germ cell formation from somatic precursor cells. Acts redundantly with WIH2. Functions in a genetic pathway downstream of SPL/NZZ and WUS and together with TRN2 in promoting megasporogenesis. Involved in resistance to abiotic stress. The polypeptide is Protein CYSTEINE-RICH TRANSMEMBRANE MODULE 13 (Arabidopsis thaliana (Mouse-ear cress)).